The following is an 87-amino-acid chain: Large ribosomal subunit protein eL33 (87 aa).

It belongs to the eukaryotic ribosomal protein eL33 family.

This is Large ribosomal subunit protein eL33 from Pyrococcus horikoshii (strain ATCC 700860 / DSM 12428 / JCM 9974 / NBRC 100139 / OT-3).